Consider the following 200-residue polypeptide: Putative vacuolar protein sorting-associated protein 24 homolog 2 (200 aa).

A coiled-coil region spans residues 2–23; it reads TIKSLLSDIEREERNVHKAIKD.

It belongs to the SNF7 family. Component of the endosomal sorting required for transport complex III (ESCRT-III), composed at least of VPS2, VPS20, VPS24 and VPS32.

The protein resides in the endosome. Functionally, component of the ESCRT-III complex, which is required for multivesicular bodies (MVBs) formation and sorting of endosomal cargo proteins into MVBs. The ESCRT-III complex is probably involved in the concentration of MVB cargo. In Arabidopsis thaliana (Mouse-ear cress), this protein is Putative vacuolar protein sorting-associated protein 24 homolog 2 (VPS24-2).